A 100-amino-acid polypeptide reads, in one-letter code: MTEKPVTYQSLDMLDNILRQQTLASVSRYRSLKSTLGENEKKSVFIDDIMSSSKDIYGQDKQKLKVSETSKYFQCENCGRSIAGGRFAQHMTKCLERRRK.

An SGF11-type zinc finger spans residues 73–94 (FQCENCGRSIAGGRFAQHMTKC).

This sequence belongs to the SGF11 family. In terms of assembly, component of the 1.8 MDa SAGA transcription coactivator-HAT complex. SAGA is built of 5 distinct domains with specialized functions. Within the SAGA complex, SUS1, SGF11, SGF73 and UBP8 form an additional subcomplex of SAGA called the DUB module (deubiquitination module). Interacts directly with SGF73, SUS1 and UBP8.

It is found in the nucleus. Functionally, functions as a component of the transcription regulatory histone acetylation (HAT) complex SAGA. At the promoters, SAGA is required for recruitment of the basal transcription machinery. It influences RNA polymerase II transcriptional activity through different activities such as TBP interaction and promoter selectivity, interaction with transcription activators, and chromatin modification through histone acetylation and deubiquitination. SAGA acetylates nucleosomal histone H3 to some extent (to form H3K9ac, H3K14ac, H3K18ac and H3K23ac). SAGA interacts with DNA via upstream activating sequences (UASs). Involved in transcriptional regulation of a subset of SAGA-regulated genes. Within the SAGA complex, participates in a subcomplex, that specifically deubiquitinates histones H2B. The polypeptide is SAGA-associated factor 11 (Debaryomyces hansenii (strain ATCC 36239 / CBS 767 / BCRC 21394 / JCM 1990 / NBRC 0083 / IGC 2968) (Yeast)).